The chain runs to 54 residues: Ovomucoid (54 aa).

One can recognise a Kazal-like domain in the interval 4–54 (VDCSDYPKPVCSLEDMPLCGSDSKTYSNKCNFCNAVVDSNGTLTLSHFGKC). 3 disulfide bridges follow: cysteine 6-cysteine 36, cysteine 14-cysteine 33, and cysteine 22-cysteine 54. N-linked (GlcNAc...) asparagine glycosylation occurs at asparagine 43.

Its subcellular location is the secreted. This Vultur gryphus (Andean condor) protein is Ovomucoid.